Here is a 267-residue protein sequence, read N- to C-terminus: Glutamate racemase (267 aa).

Substrate is bound by residues 9–10 (DS) and 41–42 (YS). Cys73 serves as the catalytic Proton donor/acceptor. Substrate is bound at residue 74-75 (NT). Catalysis depends on Cys184, which acts as the Proton donor/acceptor. 185-186 (TH) is a substrate binding site.

The protein belongs to the aspartate/glutamate racemases family.

The enzyme catalyses L-glutamate = D-glutamate. The protein operates within cell wall biogenesis; peptidoglycan biosynthesis. In terms of biological role, provides the (R)-glutamate required for cell wall biosynthesis. The protein is Glutamate racemase of Actinobacillus pleuropneumoniae serotype 7 (strain AP76).